Reading from the N-terminus, the 396-residue chain is Adenosine 3'-phospho 5'-phosphosulfate transporter 2 (396 aa).

Positions 22–42 are disordered; the sequence is NGGESAGNSPPSQRKSSTSES. Residues 27-42 show a composition bias toward polar residues; it reads AGNSPPSQRKSSTSES. Residues serine 37 and serine 40 each carry the phosphoserine modification. Asparagine 57 is a glycosylation site (N-linked (GlcNAc...) asparagine). The next 10 helical transmembrane spans lie at 66-86, 91-111, 140-160, 163-183, 189-209, 216-236, 253-273, 290-310, 318-338, and 342-362; these read CAGV…IFTV, PYGW…GLVE, LILA…LGYL, PTQV…SILI, GLLD…FTLA, NFNL…AAIG, VVFY…LVTG, FGYG…VLAL, IAAT…FVLF, and FTLQ…LNVY.

It belongs to the nucleotide-sugar transporter family. SLC35B subfamily.

Its subcellular location is the golgi apparatus membrane. In terms of biological role, mediates the transport of adenosine 3'-phospho 5'-phosphosulfate (PAPS), from cytosol into Golgi. PAPS is a universal sulfuryl donor for sulfation events that take place in the Golgi. Essential for viability. Involved in glycosaminoglycan synthesis and the subsequent signaling. May be involved in hh and dpp signaling by controlling the sulfation of heparan sulfate (HS). This chain is Adenosine 3'-phospho 5'-phosphosulfate transporter 2 (Papst2), found in Drosophila melanogaster (Fruit fly).